The following is a 324-amino-acid chain: Glyoxylate/hydroxypyruvate reductase B (324 aa).

Residues Arg-237 and Glu-266 contribute to the active site. His-285 serves as the catalytic Proton donor.

This sequence belongs to the D-isomer specific 2-hydroxyacid dehydrogenase family. GhrB subfamily. In terms of assembly, homodimer.

It is found in the cytoplasm. The catalysed reaction is glycolate + NADP(+) = glyoxylate + NADPH + H(+). It catalyses the reaction (R)-glycerate + NAD(+) = 3-hydroxypyruvate + NADH + H(+). It carries out the reaction (R)-glycerate + NADP(+) = 3-hydroxypyruvate + NADPH + H(+). In terms of biological role, catalyzes the NADPH-dependent reduction of glyoxylate and hydroxypyruvate into glycolate and glycerate, respectively. The chain is Glyoxylate/hydroxypyruvate reductase B from Escherichia fergusonii (strain ATCC 35469 / DSM 13698 / CCUG 18766 / IAM 14443 / JCM 21226 / LMG 7866 / NBRC 102419 / NCTC 12128 / CDC 0568-73).